The primary structure comprises 250 residues: Ribonuclease PH (250 aa).

Phosphate-binding positions include R99 and G137 to R139.

This sequence belongs to the RNase PH family. In terms of assembly, homohexameric ring arranged as a trimer of dimers.

The catalysed reaction is tRNA(n+1) + phosphate = tRNA(n) + a ribonucleoside 5'-diphosphate. In terms of biological role, phosphorolytic 3'-5' exoribonuclease that plays an important role in tRNA 3'-end maturation. Removes nucleotide residues following the 3'-CCA terminus of tRNAs; can also add nucleotides to the ends of RNA molecules by using nucleoside diphosphates as substrates, but this may not be physiologically important. Probably plays a role in initiation of 16S rRNA degradation (leading to ribosome degradation) during starvation. The chain is Ribonuclease PH from Bordetella parapertussis (strain 12822 / ATCC BAA-587 / NCTC 13253).